A 129-amino-acid polypeptide reads, in one-letter code: Fluoride-specific ion channel FluC 1 (129 aa).

Helical transmembrane passes span 9 to 29 (LSVGIFAFFGGGLRAYLNLIW), 33 to 53 (GTLTANIIGCFLLAFFTYFFV), 62 to 82 (LVTGLSTGFVGSFTTFSSFNL), and 98 to 118 (IYFFSSIFIGFLFAYLGMLVG). Na(+) contacts are provided by Gly-72 and Thr-75.

This sequence belongs to the fluoride channel Fluc/FEX (TC 1.A.43) family.

It localises to the cell membrane. The enzyme catalyses fluoride(in) = fluoride(out). Na(+) is not transported, but it plays an essential structural role and its presence is essential for fluoride channel function. In terms of biological role, fluoride-specific ion channel. Important for reducing fluoride concentration in the cell, thus reducing its toxicity. This chain is Fluoride-specific ion channel FluC 1, found in Lactobacillus johnsonii (strain CNCM I-12250 / La1 / NCC 533).